A 692-amino-acid polypeptide reads, in one-letter code: Elongation factor G (692 aa).

In terms of domain architecture, tr-type G spans N8–T283. Residues A17–T24, D81–H85, and N135–D138 each bind GTP.

It belongs to the TRAFAC class translation factor GTPase superfamily. Classic translation factor GTPase family. EF-G/EF-2 subfamily.

It is found in the cytoplasm. In terms of biological role, catalyzes the GTP-dependent ribosomal translocation step during translation elongation. During this step, the ribosome changes from the pre-translocational (PRE) to the post-translocational (POST) state as the newly formed A-site-bound peptidyl-tRNA and P-site-bound deacylated tRNA move to the P and E sites, respectively. Catalyzes the coordinated movement of the two tRNA molecules, the mRNA and conformational changes in the ribosome. In Helicobacter pylori (strain G27), this protein is Elongation factor G.